The chain runs to 513 residues: V-type proton ATPase subunit B, kidney isoform (513 aa).

Arginine 394 contacts ATP. Positions 510–513 (DTAL) match the PDZ-binding motif.

It belongs to the ATPase alpha/beta chains family. As to quaternary structure, V-ATPase is a heteromultimeric enzyme made up of two complexes: the ATP-hydrolytic V1 complex and the proton translocation V0 complex. The V1 complex consists of three catalytic AB heterodimers that form a heterohexamer, three peripheral stalks each consisting of EG heterodimers, one central rotor including subunits D and F, and the regulatory subunits C and H. The proton translocation complex V0 consists of the proton transport subunit a, a ring of proteolipid subunits c9c'', rotary subunit d, subunits e and f, and the accessory subunits ATP6AP1/Ac45 and ATP6AP2/PRR. Forms a complex with NHERF1 and SCL4A7. Kidney; localizes to early distal nephron, encompassing thick ascending limbs and distal convoluted tubules (at protein level). Expressed in the cochlea and endolymphatic sac.

Its subcellular location is the apical cell membrane. The protein localises to the basolateral cell membrane. Its function is as follows. Non-catalytic subunit of the V1 complex of vacuolar(H+)-ATPase (V-ATPase), a multisubunit enzyme composed of a peripheral complex (V1) that hydrolyzes ATP and a membrane integral complex (V0) that translocates protons. V-ATPase is responsible for acidifying and maintaining the pH of intracellular compartments and in some cell types, is targeted to the plasma membrane, where it is responsible for acidifying the extracellular environment. Essential for the proper assembly and activity of V-ATPase. In renal intercalated cells, mediates secretion of protons (H+) into the urine thereby ensuring correct urinary acidification. Required for optimal olfactory function by mediating the acidification of the nasal olfactory epithelium. In Homo sapiens (Human), this protein is V-type proton ATPase subunit B, kidney isoform (ATP6V1B1).